We begin with the raw amino-acid sequence, 84 residues long: ATP synthase subunit c (84 aa).

Helical transmembrane passes span 9–29 and 54–74; these read IFGS…GFSL and IVAG…LLFI.

This sequence belongs to the ATPase C chain family. F-type ATPases have 2 components, F(1) - the catalytic core - and F(0) - the membrane proton channel. F(1) has five subunits: alpha(3), beta(3), gamma(1), delta(1), epsilon(1). F(0) has three main subunits: a(1), b(2) and c(10-14). The alpha and beta chains form an alternating ring which encloses part of the gamma chain. F(1) is attached to F(0) by a central stalk formed by the gamma and epsilon chains, while a peripheral stalk is formed by the delta and b chains.

It localises to the cell inner membrane. In terms of biological role, f(1)F(0) ATP synthase produces ATP from ADP in the presence of a proton or sodium gradient. F-type ATPases consist of two structural domains, F(1) containing the extramembraneous catalytic core and F(0) containing the membrane proton channel, linked together by a central stalk and a peripheral stalk. During catalysis, ATP synthesis in the catalytic domain of F(1) is coupled via a rotary mechanism of the central stalk subunits to proton translocation. Functionally, key component of the F(0) channel; it plays a direct role in translocation across the membrane. A homomeric c-ring of between 10-14 subunits forms the central stalk rotor element with the F(1) delta and epsilon subunits. This is ATP synthase subunit c from Histophilus somni (strain 2336) (Haemophilus somnus).